The primary structure comprises 939 residues: Intimin (939 aa).

An N-terminal signal peptide occupies residues Met-1–Gly-41. A peptidoglycan-binding region spans residues Asn-40–Thr-153. The segment at Asn-40–Thr-153 is sufficient for homodimerization. A required for periplasmic localization region spans residues Asn-40–Thr-212. Positions Leu-63–Leu-112 constitute a LysM domain. The tract at residues Asp-189–Leu-430 is inverse autotransporter. The tract at residues Leu-402–Phe-411 is signature sequence for beta-barrel assembly machinery (BAM), which recognizes the unfolded beta-barrel in the periplasm. Big-1 domains follow at residues Val-560 to Val-653 and Ile-660 to Phe-751. The interval Phe-750–Lys-939 is required and sufficient for interaction with intimin receptor Tir. The segment at Leu-842–Lys-939 is C-type lectin domain. An intimin receptor Tir-binding region spans residues Leu-842 to Lys-939. The cysteines at positions 860 and 937 are disulfide-linked.

The protein belongs to the intimin/invasin family. In terms of assembly, homodimer. Interacts with Tir.

It localises to the cell outer membrane. In terms of biological role, an inverse autotransporter. Adhesin, which mediates attachment to the human intestine epithelial cells. Necessary for the production of attaching and effacing lesions on infected human tissue culture cells. Anchored to the outer membrane by binding to peptidoglycan (PGN) via its periplasmic domain, thus helping in receptor interactions during host invasion. PGN-binding may also aid in resisting mechanical and chemical stress during transit of the bacterium through the gastrointestinal tract of the host. Periplasmic domain binds purified E.coli PGN sacculi under acidic conditions in vitro and in vivo, but does not bind to chitin. Periplasmic domain binds PGN sacculi with an apparent dissociation constant (Kd) of 0.8 uM. No binding to PGN in vitro at normal physiological pH 7.4. This Escherichia coli O127:H6 (strain E2348/69 / EPEC) protein is Intimin.